We begin with the raw amino-acid sequence, 119 residues long: Large ribosomal subunit protein bL20 (119 aa).

This sequence belongs to the bacterial ribosomal protein bL20 family. Part of the 50S ribosomal subunit.

In terms of biological role, binds directly to 23S ribosomal RNA and is necessary for the in vitro assembly process of the 50S ribosomal subunit. It is not involved in the protein synthesizing functions of that subunit. This Bacillus subtilis (strain 168) protein is Large ribosomal subunit protein bL20 (rplT).